The chain runs to 210 residues: Tetraspanin-31 (210 aa).

Over 1-12 (MVCGGFACSKNA) the chain is Cytoplasmic. The helical transmembrane segment at 13 to 33 (LCALNVVYMLVSLLLIGVAAW) threads the bilayer. Over 34 to 44 (GKGLGLVSSIH) the chain is Extracellular. A helical transmembrane segment spans residues 45-65 (IIGGVIAVGVFLLLIAVAGLV). The Cytoplasmic segment spans residues 66 to 72 (GAVNHHQ). A helical membrane pass occupies residues 73–93 (VLLFFYMIILGLVFIFQFVIS). Topologically, residues 94–173 (CSCLAINRSK…FLKHSDEALK (80 aa)) are extracellular. N-linked (GlcNAc...) asparagine glycans are attached at residues asparagine 100, asparagine 109, asparagine 117, and asparagine 134. A helical membrane pass occupies residues 174-194 (ILGGVGLFFSFTEILGVWLAM). The Cytoplasmic segment spans residues 195-210 (RFRNQKDPRANPSAFL).

It belongs to the tetraspanin (TM4SF) family.

It is found in the membrane. This Homo sapiens (Human) protein is Tetraspanin-31 (TSPAN31).